The following is a 313-amino-acid chain: Porphobilinogen deaminase (313 aa).

C242 carries the S-(dipyrrolylmethanemethyl)cysteine modification.

The protein belongs to the HMBS family. In terms of assembly, monomer. Dipyrromethane serves as cofactor.

It carries out the reaction 4 porphobilinogen + H2O = hydroxymethylbilane + 4 NH4(+). Its pathway is porphyrin-containing compound metabolism; protoporphyrin-IX biosynthesis; coproporphyrinogen-III from 5-aminolevulinate: step 2/4. In terms of biological role, tetrapolymerization of the monopyrrole PBG into the hydroxymethylbilane pre-uroporphyrinogen in several discrete steps. This chain is Porphobilinogen deaminase, found in Yersinia pseudotuberculosis serotype IB (strain PB1/+).